We begin with the raw amino-acid sequence, 547 residues long: Zinc metalloproteinase-disintegrin-like BjussuMP-1 (547 aa).

Positions 1 to 133 are excised as a propeptide; the sequence is EFKVNGEPVV…KKASKLVVTA (133 aa). Residues 141–337 form the Peptidase M12B domain; sequence RYVEIVVVVD…HNPQCILNEP (197 aa). Residues E144 and D228 each coordinate Ca(2+). 3 disulfide bridges follow: C252/C332, C292/C316, and C294/C299. Residue H277 coordinates Zn(2+). The active site involves E278. Zn(2+)-binding residues include H281 and H287. 8 residues coordinate Ca(2+): C332, N335, V341, N344, L346, E348, E351, and D354. Residues 339-421 form the Disintegrin domain; it reads LTVSGNELLE…DCPRNRFHRN (83 aa). 11 disulfides stabilise this stretch: C353–C363, C362–C385, C376–C382, C381–C406, C394–C413, C425–C437, C444–C494, C459–C501, C472–C482, C489–C526, and C520–C531. N451 carries an N-linked (GlcNAc...) asparagine glycan. A glycan (N-linked (GlcNAc...) asparagine) is linked at N504.

It belongs to the venom metalloproteinase (M12B) family. P-III subfamily. P-IIIa sub-subfamily. Monomer. Requires Zn(2+) as cofactor. In terms of tissue distribution, expressed by the venom gland.

It is found in the secreted. With respect to regulation, completely inhibited by EDTA, EGTA, 1,10-phenanthroline, and partially by beta-mercaptoethanol. Is not inhibited by aprotinin and leupeptin. Functionally, this protein is a zinc metalloprotease from snake venom that causes hemorrhage in mice after intradermal injection. It inhibits platelet aggregation induced by collagen and ADP. Has moderate edema activity, but no myotoxic activity. It hydrolyzes the Aalpha-chain and more slowly the Bbeta-chain of fibrinogen, without affecting the gamma-chains. It also shows proteolytic activity on casein. It is unable to clot plasma. It also shows bactericidal activity against E.coli and S.aureus. In Bothrops jararacussu (Jararacussu), this protein is Zinc metalloproteinase-disintegrin-like BjussuMP-1.